The chain runs to 177 residues: MSRIGKLPITIPEGVKVSLNDLEVRISGPKGELSKTFKGNIVVLLAENKLLVKPLAVSKNARAMWGTARSIISNMVTGVKEGFQLKLEVNGVGYRAMVKGKYLNLMLAKSHNTKIEIPPDIKIDVPKQNIIILEGIDKEKLGQFASIIIKQRPPEPYKGKGIRFENQFIPRKEGKKN.

This sequence belongs to the universal ribosomal protein uL6 family. Part of the 50S ribosomal subunit.

In terms of biological role, this protein binds to the 23S rRNA, and is important in its secondary structure. It is located near the subunit interface in the base of the L7/L12 stalk, and near the tRNA binding site of the peptidyltransferase center. The chain is Large ribosomal subunit protein uL6 from Rickettsia canadensis (strain McKiel).